The chain runs to 198 residues: Probable GTP-binding protein EngB (198 aa).

An EngB-type G domain is found at 22-195 (DLPEIALAGR…WKAIHKMTKT (174 aa)). GTP is bound by residues 30–37 (GRSNVGKS), 57–61 (GKTQT), 75–78 (DVPG), 142–145 (TKAD), and 174–176 (FSS). Ser-37 and Thr-59 together coordinate Mg(2+).

This sequence belongs to the TRAFAC class TrmE-Era-EngA-EngB-Septin-like GTPase superfamily. EngB GTPase family. Mg(2+) serves as cofactor.

Necessary for normal cell division and for the maintenance of normal septation. The sequence is that of Probable GTP-binding protein EngB from Bacillus cereus (strain G9842).